The primary structure comprises 137 residues: Proofreading thioesterase EntH (137 aa).

Glu63 functions as the Nucleophile or proton acceptor in the catalytic mechanism.

Belongs to the thioesterase PaaI family. As to quaternary structure, homotetramer. Dimer of dimers. Interacts specifically with the aryl carrier protein (ArCP) domain of EntB.

It is found in the cytoplasm. It functions in the pathway siderophore biosynthesis; enterobactin biosynthesis. In terms of biological role, required for optimal enterobactin synthesis. Acts as a proofreading enzyme that prevents EntB misacylation by hydrolyzing the thioester bound existing between EntB and wrongly charged molecules. The chain is Proofreading thioesterase EntH from Enterobacter lignolyticus (strain SCF1).